The sequence spans 383 residues: Acetylornithine deacetylase (383 aa).

H80 is a binding site for Zn(2+). The active site involves D82. Zn(2+) is bound at residue D112. E144 is a catalytic residue. Zn(2+)-binding residues include E145, E169, and H355.

This sequence belongs to the peptidase M20A family. ArgE subfamily. Homodimer. Requires Zn(2+) as cofactor. The cofactor is Co(2+). Glutathione is required as a cofactor.

Its subcellular location is the cytoplasm. It catalyses the reaction N(2)-acetyl-L-ornithine + H2O = L-ornithine + acetate. Its pathway is amino-acid biosynthesis; L-arginine biosynthesis; L-ornithine from N(2)-acetyl-L-ornithine (linear): step 1/1. Functionally, catalyzes the hydrolysis of the amide bond of N(2)-acetylated L-amino acids. Cleaves the acetyl group from N-acetyl-L-ornithine to form L-ornithine, an intermediate in L-arginine biosynthesis pathway, and a branchpoint in the synthesis of polyamines. This is Acetylornithine deacetylase from Escherichia coli O139:H28 (strain E24377A / ETEC).